Reading from the N-terminus, the 88-residue chain is Small ribosomal subunit protein uS15 (88 aa).

This sequence belongs to the universal ribosomal protein uS15 family. In terms of assembly, part of the 30S ribosomal subunit. Forms a bridge to the 50S subunit in the 70S ribosome, contacting the 23S rRNA.

In terms of biological role, one of the primary rRNA binding proteins, it binds directly to 16S rRNA where it helps nucleate assembly of the platform of the 30S subunit by binding and bridging several RNA helices of the 16S rRNA. Forms an intersubunit bridge (bridge B4) with the 23S rRNA of the 50S subunit in the ribosome. This is Small ribosomal subunit protein uS15 from Borreliella afzelii (strain PKo) (Borrelia afzelii).